The primary structure comprises 220 residues: Ras-related protein Rab-3 (220 aa).

Residues Ser30, Gly33, Lys34, Thr35, Ser36, Thr47, Ser48, Ser52, Thr53, Gly79, Asn134, Asp137, Ala165, and Lys166 each contribute to the GTP site. Thr35 is a Mg(2+) binding site. Residues 50–58 carry the Effector region motif; sequence FVSTVGIDF. A Mg(2+)-binding site is contributed by Thr53. Residues 194–220 are disordered; that stretch reads PTLVGGGQKGQRLTDQPQGTPNANCNC. Positions 204–220 are enriched in polar residues; sequence QRLTDQPQGTPNANCNC. Residues Cys218 and Cys220 are each lipidated (S-geranylgeranyl cysteine). Cys220 is subject to Cysteine methyl ester.

It belongs to the small GTPase superfamily. Rab family. In terms of assembly, interacts with Rph.

It localises to the cytoplasmic vesicle. The protein localises to the secretory vesicle. It is found in the synaptic vesicle. Its function is as follows. Involved in exocytosis by regulating a late step in synaptic vesicle fusion. Could play a role in neurotransmitter release by regulating membrane flow in the nerve terminal. The protein is Ras-related protein Rab-3 (Rab3) of Drosophila melanogaster (Fruit fly).